The sequence spans 411 residues: Cladofulvin cluster transcriptional coactivator claA (411 aa).

Polar residues predominate over residues 1–27; that stretch reads MSDSLAGNGMRQNLNRSSTSSNHTGHA. Residues 1-32 form a disordered region; that stretch reads MSDSLAGNGMRQNLNRSSTSSNHTGHAQNGRA. One can recognise an HTH iclR-type domain in the interval 47–117; sequence LACQVQSLAC…DPGHIAHTAL (71 aa). A DNA-binding region (H-T-H motif) is located at residues 77–96; that stretch reads LHDVAELANVPASQLSRVVR.

The protein resides in the nucleus. Transcriptional coactivator; part of the gene cluster that mediates the biosynthesis of cladofulvin, a conidial pigment not required for virulence but that plays a role in fitness and resistance to environmental stresses including UV light and low-temperature stress. With claE, coregulates the production of cladofulvin. The polypeptide is Cladofulvin cluster transcriptional coactivator claA (Passalora fulva (Tomato leaf mold)).